The chain runs to 211 residues: Thiamine-phosphate synthase (211 aa).

4-amino-2-methyl-5-(diphosphooxymethyl)pyrimidine-binding positions include 37 to 41 (QLRIK) and Asn69. Mg(2+) contacts are provided by Asp70 and Asp89. 4-amino-2-methyl-5-(diphosphooxymethyl)pyrimidine is bound at residue Ser108. 134 to 136 (TQT) is a 2-[(2R,5Z)-2-carboxy-4-methylthiazol-5(2H)-ylidene]ethyl phosphate binding site. Lys137 contributes to the 4-amino-2-methyl-5-(diphosphooxymethyl)pyrimidine binding site. 2-[(2R,5Z)-2-carboxy-4-methylthiazol-5(2H)-ylidene]ethyl phosphate-binding positions include Gly166 and 186 to 187 (VS).

Belongs to the thiamine-phosphate synthase family. Requires Mg(2+) as cofactor.

It catalyses the reaction 2-[(2R,5Z)-2-carboxy-4-methylthiazol-5(2H)-ylidene]ethyl phosphate + 4-amino-2-methyl-5-(diphosphooxymethyl)pyrimidine + 2 H(+) = thiamine phosphate + CO2 + diphosphate. It carries out the reaction 2-(2-carboxy-4-methylthiazol-5-yl)ethyl phosphate + 4-amino-2-methyl-5-(diphosphooxymethyl)pyrimidine + 2 H(+) = thiamine phosphate + CO2 + diphosphate. The enzyme catalyses 4-methyl-5-(2-phosphooxyethyl)-thiazole + 4-amino-2-methyl-5-(diphosphooxymethyl)pyrimidine + H(+) = thiamine phosphate + diphosphate. It participates in cofactor biosynthesis; thiamine diphosphate biosynthesis; thiamine phosphate from 4-amino-2-methyl-5-diphosphomethylpyrimidine and 4-methyl-5-(2-phosphoethyl)-thiazole: step 1/1. Functionally, condenses 4-methyl-5-(beta-hydroxyethyl)thiazole monophosphate (THZ-P) and 2-methyl-4-amino-5-hydroxymethyl pyrimidine pyrophosphate (HMP-PP) to form thiamine monophosphate (TMP). This Salmonella typhimurium (strain LT2 / SGSC1412 / ATCC 700720) protein is Thiamine-phosphate synthase.